The sequence spans 236 residues: Large ribosomal subunit protein uL1 (236 aa).

The protein belongs to the universal ribosomal protein uL1 family. Part of the 50S ribosomal subunit.

In terms of biological role, binds directly to 23S rRNA. The L1 stalk is quite mobile in the ribosome, and is involved in E site tRNA release. Its function is as follows. Protein L1 is also a translational repressor protein, it controls the translation of the L11 operon by binding to its mRNA. This is Large ribosomal subunit protein uL1 from Kocuria rhizophila (strain ATCC 9341 / DSM 348 / NBRC 103217 / DC2201).